The chain runs to 270 residues: MINKINFVKMHGLGNDFVIVNKRDLATSYNLSHLAKNMADRHTGIGCDQCIIYEENNDFYTMIIYNIDGSSAKLCGNAIRCLAKLIYLDTGKQNITVMVGKKKLLCNVKAANKISVNVGNVSFNETWMPSRDKIWKFAERYMLDLKEMLCVDIGNPHLIIFSKLEPQDKTIIGQKLQAKELFADGVNVNFAEVKDNKIYLSVWERGAGLTLACGSGACASFAAGLKLGFVHSPSTVVFEYGNLIMREEDGNIIMQGAATFVMRGEYYYEK.

Substrate is bound by residues Asn-15, Gln-49, and Asn-66. Catalysis depends on Cys-75, which acts as the Proton donor. Residues 76–77 (GN), Asn-155, Asn-187, and 204–205 (ER) each bind substrate. The active-site Proton acceptor is Cys-213. Residue 214 to 215 (GS) coordinates substrate.

Belongs to the diaminopimelate epimerase family. In terms of assembly, homodimer.

Its subcellular location is the cytoplasm. The catalysed reaction is (2S,6S)-2,6-diaminopimelate = meso-2,6-diaminopimelate. The protein operates within amino-acid biosynthesis; L-lysine biosynthesis via DAP pathway; DL-2,6-diaminopimelate from LL-2,6-diaminopimelate: step 1/1. Functionally, catalyzes the stereoinversion of LL-2,6-diaminopimelate (L,L-DAP) to meso-diaminopimelate (meso-DAP), a precursor of L-lysine and an essential component of the bacterial peptidoglycan. This chain is Diaminopimelate epimerase, found in Rickettsia prowazekii (strain Madrid E).